A 336-amino-acid chain; its full sequence is HTH-type transcriptional regulator AscG (336 aa).

The HTH lacI-type domain maps to 2–56 (TTMLEVAKRAGVSKATVSRVLSGNGYVSQETKDRVFQAVEESGYRPNLLARNLSA). Residues 4-23 (MLEVAKRAGVSKATVSRVLS) constitute a DNA-binding region (H-T-H motif).

In terms of biological role, repressor of the asc operon. The cryptic operon is activated by the insertion of IS186 into the ascG gene. The chain is HTH-type transcriptional regulator AscG (ascG) from Escherichia coli (strain K12).